A 478-amino-acid chain; its full sequence is tRNA(Ile)-lysidine synthase (478 aa).

Position 27-32 (Ser27–Ser32) interacts with ATP.

The protein belongs to the tRNA(Ile)-lysidine synthase family.

The protein resides in the cytoplasm. The catalysed reaction is cytidine(34) in tRNA(Ile2) + L-lysine + ATP = lysidine(34) in tRNA(Ile2) + AMP + diphosphate + H(+). In terms of biological role, ligates lysine onto the cytidine present at position 34 of the AUA codon-specific tRNA(Ile) that contains the anticodon CAU, in an ATP-dependent manner. Cytidine is converted to lysidine, thus changing the amino acid specificity of the tRNA from methionine to isoleucine. The sequence is that of tRNA(Ile)-lysidine synthase from Rickettsia africae (strain ESF-5).